Consider the following 268-residue polypeptide: Secreted RxLR effector protein 6 (268 aa).

The N-terminal stretch at 1–19 (MRGAFYIAIALLVVRSRTA) is a signal peptide. Positions 48–63 (RYLRDGLAHSAANEER) match the RxLR-dEER motif. The segment at 90 to 123 (IGGHSHTPKSKRKVNLSPAKSQSGIRKKSTSINK) is disordered. Over residues 107–123 (PAKSQSGIRKKSTSINK) the composition is skewed to polar residues.

Belongs to the RxLR effector family.

The protein localises to the secreted. It localises to the host nucleus. It is found in the host cytoplasm. In terms of biological role, secreted effector that completely suppresses the host cell death induced by cell death-inducing proteins. The chain is Secreted RxLR effector protein 6 from Plasmopara viticola (Downy mildew of grapevine).